Reading from the N-terminus, the 347-residue chain is Homoisocitrate dehydrogenase (347 aa).

Residue 68–70 (ITS) participates in NADH binding. Ser70 is a binding site for (2R,3S)-homoisocitrate. Ser81 is subject to Phosphoserine. (2R,3S)-homoisocitrate contacts are provided by Arg87, Arg97, Arg128, Tyr135, Lys181, and Asn183. An NADH-binding site is contributed by Asn183. The Mg(2+) site is built by Asp213, Asp237, and Asp241. NADH is bound by residues 270–274 (GSAPD) and Asn282.

This sequence belongs to the isocitrate and isopropylmalate dehydrogenases family. Mg(2+) serves as cofactor.

It carries out the reaction (2R,3S)-homoisocitrate + NAD(+) = 2-oxoadipate + CO2 + NADH. The enzyme catalyses (2R,3S)-iso(homo)2citrate + NAD(+) = 2-oxoheptanedioate + CO2 + NADH. It catalyses the reaction (2R,3S)-iso(homo)3citrate + NAD(+) = 2-oxosuberate + CO2 + NADH. It functions in the pathway organic acid metabolism; 2-oxosuberate biosynthesis. Functionally, catalyzes the NAD-dependent oxidation and decarboxylation of (2R,3S)-homoisocitrate, (2R,3S)-homo(2)-isocitrate and (2R,3S)-homo(3)-isocitrate, into 2-oxoadipate, 2-oxopimelate (2-oxoheptanedioate), and 2-oxosuberate, respectively. All these substrates are intermediates in the biosynthesis of biotin and of 7-mercaptoheptanoate, a moiety of coenzyme B in methanoarchaea. Is also able to produce 2-oxoazelate from (2R,3S)-homo(4)-isocitrate in vitro, but this substrate is probably not physiologically relevant. Is unable to use any isomer of isocitrate or isopropylmalate as a substrate, and NADP as an oxidant. This is Homoisocitrate dehydrogenase (aksF) from Methanocaldococcus jannaschii (strain ATCC 43067 / DSM 2661 / JAL-1 / JCM 10045 / NBRC 100440) (Methanococcus jannaschii).